Consider the following 502-residue polypeptide: Glutamate--tRNA ligase (502 aa).

The 'HIGH' region signature appears at 9–19 (PSPTGDPHVGT). Positions 106, 108, 133, and 135 each coordinate Zn(2+). A 'KMSKS' region motif is present at residues 250–254 (KLSKR). K253 serves as a coordination point for ATP.

Belongs to the class-I aminoacyl-tRNA synthetase family. Glutamate--tRNA ligase type 1 subfamily. As to quaternary structure, monomer. It depends on Zn(2+) as a cofactor.

It localises to the cytoplasm. The catalysed reaction is tRNA(Glu) + L-glutamate + ATP = L-glutamyl-tRNA(Glu) + AMP + diphosphate. In terms of biological role, catalyzes the attachment of glutamate to tRNA(Glu) in a two-step reaction: glutamate is first activated by ATP to form Glu-AMP and then transferred to the acceptor end of tRNA(Glu). This is Glutamate--tRNA ligase from Protochlamydia amoebophila (strain UWE25).